The following is a 283-amino-acid chain: 2-dehydro-3-deoxyphosphooctonate aldolase (283 aa).

This sequence belongs to the KdsA family.

Its subcellular location is the cytoplasm. It carries out the reaction D-arabinose 5-phosphate + phosphoenolpyruvate + H2O = 3-deoxy-alpha-D-manno-2-octulosonate-8-phosphate + phosphate. Its pathway is carbohydrate biosynthesis; 3-deoxy-D-manno-octulosonate biosynthesis; 3-deoxy-D-manno-octulosonate from D-ribulose 5-phosphate: step 2/3. It participates in bacterial outer membrane biogenesis; lipopolysaccharide biosynthesis. This is 2-dehydro-3-deoxyphosphooctonate aldolase from Shewanella frigidimarina (strain NCIMB 400).